The sequence spans 302 residues: Urease accessory protein UreD 2 (302 aa).

It belongs to the UreD family. As to quaternary structure, ureD, UreF and UreG form a complex that acts as a GTP-hydrolysis-dependent molecular chaperone, activating the urease apoprotein by helping to assemble the nickel containing metallocenter of UreC. The UreE protein probably delivers the nickel.

The protein resides in the cytoplasm. In terms of biological role, required for maturation of urease via the functional incorporation of the urease nickel metallocenter. The chain is Urease accessory protein UreD 2 from Brucella canis (strain ATCC 23365 / NCTC 10854 / RM-666).